Consider the following 527-residue polypeptide: Serine/threonine-protein kinase CHK1 (527 aa).

In terms of domain architecture, Protein kinase spans 15–281; that stretch reads VVLGDTVGQG…LKALKLHPWV (267 aa). Residues 21–29 and Lys-45 contribute to the ATP site; that span reads VGQGAFACV. Asp-142 functions as the Proton acceptor in the catalytic mechanism.

This sequence belongs to the protein kinase superfamily. CAMK Ser/Thr protein kinase family. NIM1 subfamily.

It localises to the nucleus. It catalyses the reaction L-seryl-[protein] + ATP = O-phospho-L-seryl-[protein] + ADP + H(+). The catalysed reaction is L-threonyl-[protein] + ATP = O-phospho-L-threonyl-[protein] + ADP + H(+). Serine/threonine-protein kinase which is required for checkpoint-mediated cell cycle arrest and activation of DNA repair in response to the presence of DNA damage or unreplicated DNA. May also negatively regulate cell cycle progression during unperturbed cell cycles. Controls phosphorylation and abundance of PDS1 to prevent anaphase entry. Also helps prevent mitotic exit. This is Serine/threonine-protein kinase CHK1 (CHK1) from Saccharomyces cerevisiae (strain ATCC 204508 / S288c) (Baker's yeast).